Here is a 546-residue protein sequence, read N- to C-terminus: DNA ligase (546 aa).

Glutamate 244 lines the ATP pocket. The active-site N6-AMP-lysine intermediate is lysine 246. Arginine 251, arginine 266, glutamate 295, phenylalanine 334, arginine 405, and lysine 411 together coordinate ATP.

The protein belongs to the ATP-dependent DNA ligase family. The cofactor is Mg(2+).

The catalysed reaction is ATP + (deoxyribonucleotide)n-3'-hydroxyl + 5'-phospho-(deoxyribonucleotide)m = (deoxyribonucleotide)n+m + AMP + diphosphate.. DNA ligase that seals nicks in double-stranded DNA during DNA replication, DNA recombination and DNA repair. This chain is DNA ligase, found in Methanocorpusculum labreanum (strain ATCC 43576 / DSM 4855 / Z).